Reading from the N-terminus, the 488-residue chain is Catalase (488 aa).

Residues 1–26 (MTDRKNLTTNQGVPVGDNQNSMTAGR) are disordered. Residues 7–23 (LTTNQGVPVGDNQNSMT) show a composition bias toward polar residues. Active-site residues include H55 and N128. Y338 is a binding site for heme.

Belongs to the catalase family. Requires heme as cofactor.

The protein resides in the cytoplasm. The catalysed reaction is 2 H2O2 = O2 + 2 H2O. Decomposes hydrogen peroxide into water and oxygen; serves to protect cells from the toxic effects of hydrogen peroxide. The protein is Catalase (kat) of Listeria monocytogenes serovar 1/2a (strain ATCC BAA-679 / EGD-e).